The primary structure comprises 330 residues: Ribosomal RNA small subunit methyltransferase A (330 aa).

5 residues coordinate S-adenosyl-L-methionine: H29, L31, G56, E77, and D98. The segment at 115-158 (PVRSAGLPQAETAPKGLEPAGSSSQQGPRDWLRQTAGAAAPSRG) is disordered. N177 lines the S-adenosyl-L-methionine pocket.

The protein belongs to the class I-like SAM-binding methyltransferase superfamily. rRNA adenine N(6)-methyltransferase family. RsmA subfamily.

The protein resides in the cytoplasm. It carries out the reaction adenosine(1518)/adenosine(1519) in 16S rRNA + 4 S-adenosyl-L-methionine = N(6)-dimethyladenosine(1518)/N(6)-dimethyladenosine(1519) in 16S rRNA + 4 S-adenosyl-L-homocysteine + 4 H(+). Its function is as follows. Specifically dimethylates two adjacent adenosines (A1518 and A1519) in the loop of a conserved hairpin near the 3'-end of 16S rRNA in the 30S particle. May play a critical role in biogenesis of 30S subunits. The protein is Ribosomal RNA small subunit methyltransferase A of Polaromonas sp. (strain JS666 / ATCC BAA-500).